Here is a 137-residue protein sequence, read N- to C-terminus: Putative pre-16S rRNA nuclease (137 aa).

Belongs to the YqgF nuclease family.

It is found in the cytoplasm. Its function is as follows. Could be a nuclease involved in processing of the 5'-end of pre-16S rRNA. The sequence is that of Putative pre-16S rRNA nuclease from Actinobacillus pleuropneumoniae serotype 5b (strain L20).